A 644-amino-acid polypeptide reads, in one-letter code: Exoribonuclease 2 (644 aa).

Residues 189 to 516 form the RNB domain; it reads REDLTALDFV…NHRLLKAVIK (328 aa). The region spanning 561-643 is the S1 motif domain; sequence DTRFAAEIVD…ETRSIIARPV (83 aa).

This sequence belongs to the RNR ribonuclease family. RNase II subfamily.

It is found in the cytoplasm. It catalyses the reaction Exonucleolytic cleavage in the 3'- to 5'-direction to yield nucleoside 5'-phosphates.. Its function is as follows. Involved in mRNA degradation. Hydrolyzes single-stranded polyribonucleotides processively in the 3' to 5' direction. In Escherichia coli O45:K1 (strain S88 / ExPEC), this protein is Exoribonuclease 2.